The sequence spans 487 residues: CUGBP Elav-like family member 1 (487 aa).

Position 1 is an N-acetylmethionine (Met-1). At Thr-4 the chain carries Phosphothreonine. 2 RRM domains span residues Ile-16–Ser-99 and Arg-108–Thr-188. Lys-109 is covalently cross-linked (Glycyl lysine isopeptide (Lys-Gly) (interchain with G-Cter in SUMO2)). 2 positions are modified to phosphoserine: Ser-179 and Ser-303. The interval Thr-277–Val-310 is disordered. The segment covering Ala-283–Val-310 has biased composition (low complexity). The RRM 3 domain maps to Ala-402–Ser-480.

It belongs to the CELF/BRUNOL family. Interacts with HNRNPH1; the interaction in RNA-dependent. Interacts with PARN. Component of an EIF2 complex at least composed of CELF1/CUGBP1, CALR, CALR3, EIF2S1, EIF2S2, HSP90B1 and HSPA5. Associates with polysomes.

Its subcellular location is the nucleus. The protein localises to the cytoplasm. RNA-binding protein implicated in the regulation of several post-transcriptional events. Involved in pre-mRNA alternative splicing, mRNA translation and stability. Mediates exon inclusion and/or exclusion in pre-mRNA that are subject to tissue-specific and developmentally regulated alternative splicing. Specifically activates exon 5 inclusion of cardiac isoforms of TNNT2 during heart remodeling at the juvenile to adult transition. Acts both as an activator and as a repressor of a pair of coregulated exons: promotes inclusion of the smooth muscle (SM) exon but exclusion of the non-muscle (NM) exon in actinin pre-mRNAs. Activates SM exon 5 inclusion by antagonizing the repressive effect of PTB. Promotes exclusion of exon 11 of the INSR pre-mRNA. Inhibits, together with HNRNPH1, insulin receptor (IR) pre-mRNA exon 11 inclusion in myoblast. Increases translation and controls the choice of translation initiation codon of CEBPB mRNA. Increases mRNA translation of CEBPB in aging liver. Increases translation of CDKN1A mRNA by antagonizing the repressive effect of CALR3. Mediates rapid cytoplasmic mRNA deadenylation. Recruits the deadenylase PARN to the poly(A) tail of EDEN-containing mRNAs to promote their deadenylation. Required for completion of spermatogenesis. Binds to (CUG)n triplet repeats in the 3'-UTR of transcripts such as DMPK and to Bruno response elements (BREs). Binds to muscle-specific splicing enhancer (MSE) intronic sites flanking the alternative exon 5 of TNNT2 pre-mRNA. Binds to AU-rich sequences (AREs or EDEN-like) localized in the 3'-UTR of JUN and FOS mRNAs. Binds to the IR RNA. Binds to the 5'-region of CDKN1A and CEBPB mRNAs. Binds with the 5'-region of CEBPB mRNA in aging liver. May be a specific regulator of miRNA biogenesis. Binds to primary microRNA pri-MIR140 and, with CELF2, negatively regulates the processing to mature miRNA. The polypeptide is CUGBP Elav-like family member 1 (Celf1) (Rattus norvegicus (Rat)).